The chain runs to 324 residues: Ribonucleoside-diphosphate reductase subunit beta nrdF2 (324 aa).

Fe cation is bound by residues Glu-103 and His-106. Tyr-110 is an active-site residue. Fe cation contacts are provided by Glu-163, Glu-197, and His-200.

Belongs to the ribonucleoside diphosphate reductase small chain family. In terms of assembly, tetramer of two alpha and two beta subunits. Requires Fe cation as cofactor.

It carries out the reaction a 2'-deoxyribonucleoside 5'-diphosphate + [thioredoxin]-disulfide + H2O = a ribonucleoside 5'-diphosphate + [thioredoxin]-dithiol. Functionally, provides the precursors necessary for DNA synthesis. Catalyzes the biosynthesis of deoxyribonucleotides from the corresponding ribonucleotides. The protein is Ribonucleoside-diphosphate reductase subunit beta nrdF2 (nrdF2) of Mycobacterium tuberculosis (strain CDC 1551 / Oshkosh).